Reading from the N-terminus, the 741-residue chain is Nuclear poly(A) polymerase 4 (741 aa).

Residues 101–103 (FGS), 113–116 (ADID), 114–116 (DID), aspartate 169, lysine 230, tyrosine 239, and 248–249 (GV) each bind ATP. Aspartate 114, aspartate 116, and aspartate 169 together coordinate Mg(2+). The Nuclear localization signal signature appears at 485 to 492 (RRRQLPPF). Disordered stretches follow at residues 494-556 (FPNG…LSPQ) and 683-741 (YEGF…RLLT). Over residues 534–551 (KNDSEMMDVRPEKPEKRA) the composition is skewed to basic and acidic residues. The span at 701-717 (LYSQSGMSEDLQSNSLV) shows a compositional bias: polar residues. The segment covering 721 to 731 (EKSEDRARSES) has biased composition (basic and acidic residues). The segment covering 732 to 741 (FQKSQIRLLT) has biased composition (polar residues).

It belongs to the poly(A) polymerase family. In terms of assembly, monomer. Forms a complex with cleavage and polyadenylation specificity factor (CPSF) subunits CFIS2, FIPS3, PAPS1, PABN1, PABN2, PABN3 and FIPS5. The cofactor is Mg(2+). Mn(2+) serves as cofactor. Mostly expressed in flowers (very active in pollen, sepals, styles, and stigmas), cotyledons and hypocotyls, and, to a lower extent, in roots (confined to the vascular tissue in the radicle) and leaves (in the vascular tissue and leaf petioles). Barely detected in stems. Active in the primary and secondary root systems.

Its subcellular location is the nucleus. It carries out the reaction RNA(n) + ATP = RNA(n)-3'-adenine ribonucleotide + diphosphate. Its function is as follows. Essential protein. Polymerase that creates the 3'-poly(A) tail of mRNA's. Also required for the endoribonucleolytic cleavage reaction at some polyadenylation sites. May acquire specificity through interaction with a cleavage and polyadenylation specificity factor (CPSF) at its C-terminus. This is Nuclear poly(A) polymerase 4 from Arabidopsis thaliana (Mouse-ear cress).